The following is a 542-amino-acid chain: Organic anion transporter 3 (542 aa).

At 1–9 (MTFSEILDR) the chain is on the cytoplasmic side. S4 carries the post-translational modification Phosphoserine. The chain crosses the membrane as a helical span at residues 10-30 (VGSMGHFQFLHVAILGLPILN). Topologically, residues 31–123 (MANHNLLQIF…LVCNSNKLKE (93 aa)) are extracellular. Residues N86 and N102 are each glycosylated (N-linked (GlcNAc...) asparagine). Residues 124–144 (MAQSIFMAGILIGGLVLGDLS) form a helical membrane-spanning segment. Topologically, residues 145 to 154 (DRFGRRPILT) are cytoplasmic. A helical transmembrane segment spans residues 155–175 (CSYLLLAASGSGAAFSPTFPI). Position 176 (Y176) is a topological domain, extracellular. A helical transmembrane segment spans residues 177 to 197 (MVFRFLCGFGISGITLSTVIL). The Cytoplasmic segment spans residues 198–212 (NVEWVPTRMRAIMST). The chain crosses the membrane as a helical span at residues 213 to 233 (ALGYCYTFGQFILPGLAYAIP). Residues 234 to 236 (QWR) are Extracellular-facing. The chain crosses the membrane as a helical span at residues 237–257 (WLQLTVSIPFFVFFLSSWWTP). The Cytoplasmic segment spans residues 258 to 327 (ESIRWLVLSG…FRIPMLRRMT (70 aa)). Residues 328 to 348 (FCLSLAWFATGFAYYSLAMGV) form a helical membrane-spanning segment. At 349 to 354 (EEFGVN) the chain is on the extracellular side. The chain crosses the membrane as a helical span at residues 355–375 (LYILQIIFGGVDVPAKFITIL). Over 376-386 (SLSYLGRHTTQ) the chain is Cytoplasmic. A helical membrane pass occupies residues 387 to 407 (AAALLLAGGAILALTFVPLDL). Residues 408 to 411 (QTVR) lie on the Extracellular side of the membrane. The chain crosses the membrane as a helical span at residues 412–432 (TVLAVFGKGCLSSSFSCLFLY). Over 433–471 (TSELYPTVIRQTGMGVSNLWTRVGSMVSPLVKITGEVQP) the chain is Cytoplasmic. A helical membrane pass occupies residues 472 to 492 (FIPNIIYGITALLGGSAALFL). Topologically, residues 493–542 (PETLNQPLPETIEDLENWSLRAKKPKQEPEVEKASQRIPLQPHGPGLGSS) are extracellular. The tract at residues 515–542 (KKPKQEPEVEKASQRIPLQPHGPGLGSS) is disordered. Over residues 517–527 (PKQEPEVEKAS) the composition is skewed to basic and acidic residues.

This sequence belongs to the major facilitator (TC 2.A.1) superfamily. Organic cation transporter (TC 2.A.1.19) family. In terms of tissue distribution, strongly expressed in kidney. Weaker expression in brain and skeletal muscle. Expressed in adrenal glands.

It is found in the basolateral cell membrane. It catalyses the reaction estrone 3-sulfate(out) + glutarate(in) = estrone 3-sulfate(in) + glutarate(out). The enzyme catalyses estrone 3-sulfate(in) + 2-oxoglutarate(out) = estrone 3-sulfate(out) + 2-oxoglutarate(in). It carries out the reaction glutarate(in) + 2-oxoglutarate(out) = glutarate(out) + 2-oxoglutarate(in). The catalysed reaction is urate(in) + 2-oxoglutarate(out) = urate(out) + 2-oxoglutarate(in). It catalyses the reaction taurocholate(out) + glutarate(in) = taurocholate(in) + glutarate(out). The enzyme catalyses dehydroepiandrosterone 3-sulfate(out) + glutarate(in) = dehydroepiandrosterone 3-sulfate(in) + glutarate(out). It carries out the reaction prostaglandin F2alpha(out) + glutarate(in) = prostaglandin F2alpha(in) + glutarate(out). The catalysed reaction is prostaglandin F2alpha(out) + 2-oxoglutarate(in) = prostaglandin F2alpha(in) + 2-oxoglutarate(out). It catalyses the reaction (R)-carnitine(out) + 2-oxoglutarate(in) = (R)-carnitine(in) + 2-oxoglutarate(out). The enzyme catalyses glutarate(in) + (R)-carnitine(out) = glutarate(out) + (R)-carnitine(in). It carries out the reaction prostaglandin E2(out) + 2-oxoglutarate(in) = prostaglandin E2(in) + 2-oxoglutarate(out). The catalysed reaction is prostaglandin E2(out) + glutarate(in) = prostaglandin E2(in) + glutarate(out). It catalyses the reaction urate(in) + glutarate(out) = urate(out) + glutarate(in). The enzyme catalyses taurocholate(out) + 2-oxoglutarate(in) = taurocholate(in) + 2-oxoglutarate(out). It carries out the reaction dehydroepiandrosterone 3-sulfate(out) + 2-oxoglutarate(in) = dehydroepiandrosterone 3-sulfate(in) + 2-oxoglutarate(out). The catalysed reaction is kynurenate(out) + a dicarboxylate(in) = kynurenate(in) + a dicarboxylate(out). It catalyses the reaction (indol-3-yl)acetate(out) + a dicarboxylate(in) = (indol-3-yl)acetate(in) + a dicarboxylate(out). The enzyme catalyses indoxyl sulfate(out) + a dicarboxylate(in) = indoxyl sulfate(in) + a dicarboxylate(out). It carries out the reaction N-benzoylglycine(out) + a dicarboxylate(in) = N-benzoylglycine(in) + a dicarboxylate(out). The catalysed reaction is 3-carboxy-4-methyl-5-propyl-2-furanpropanoate(out) + a dicarboxylate(in) = 3-carboxy-4-methyl-5-propyl-2-furanpropanoate(in) + a dicarboxylate(out). It catalyses the reaction (6R)-L-erythro-5,6,7,8-tetrahydrobiopterin(out) + a dicarboxylate(in) = (6R)-L-erythro-5,6,7,8-tetrahydrobiopterin(in) + a dicarboxylate(out). The enzyme catalyses L-erythro-7,8-dihydrobiopterin(out) + a dicarboxylate(in) = L-erythro-7,8-dihydrobiopterin(in) + a dicarboxylate(out). It carries out the reaction L-sepiapterin(out) + a dicarboxylate(in) = L-sepiapterin(in) + a dicarboxylate(out). In terms of biological role, functions as an organic anion/dicarboxylate exchanger that couples organic anion uptake indirectly to the sodium gradient. Transports organic anions such as estrone 3-sulfate (E1S) and urate in exchange for dicarboxylates such as glutarate or ketoglutarate (2-oxoglutarate). Plays an important role in the excretion of endogenous and exogenous organic anions, especially from the kidney and the brain. E1S transport is pH- and chloride-dependent and may also involve E1S/cGMP exchange. Responsible for the transport of prostaglandin E2 (PGE2) and prostaglandin F2(alpha) (PGF2(alpha)) in the basolateral side of the renal tubule. Involved in the transport of neuroactive tryptophan metabolites kynurenate and xanthurenate. Functions as a biopterin transporters involved in the uptake and the secretion of coenzymes tetrahydrobiopterin (BH4), dihydrobiopterin (BH2) and sepiapterin to urine, thereby determining baseline levels of blood biopterins. May be involved in the basolateral transport of steviol, a metabolite of the popular sugar substitute stevioside. May participate in the detoxification/ renal excretion of drugs and xenobiotics, such as the histamine H(2)-receptor antagonists fexofenadine and cimetidine, the antibiotic benzylpenicillin (PCG), the anionic herbicide 2,4-dichloro-phenoxyacetate (2,4-D), the diagnostic agent p-aminohippurate (PAH), the antiviral acyclovir (ACV), and the mycotoxin ochratoxin (OTA), by transporting these exogenous organic anions across the cell membrane in exchange for dicarboxylates such as 2-oxoglutarate. Contributes to the renal uptake of potent uremic toxins (indoxyl sulfate (IS), indole acetate (IA), hippurate/N-benzoylglycine (HA) and 3-carboxy-4-methyl-5-propyl-2-furanpropionate (CMPF)), pravastatin, PCG, E1S and dehydroepiandrosterone sulfate (DHEAS), and is partly involved in the renal uptake of temocaprilat (an angiotensin-converting enzyme (ACE) inhibitor). May contribute to the release of cortisol in the adrenals. Involved in one of the detoxification systems on the choroid plexus (CP), removes substrates such as E1S or taurocholate (TC), PCG, 2,4-D and PAH, from the cerebrospinal fluid (CSF) to the blood for eventual excretion in urine and bile. Also contributes to the uptake of several other organic compounds such as the prostanoids prostaglandin E(2) and prostaglandin F(2-alpha), L-carnitine, and the therapeutic drugs allopurinol, 6-mercaptopurine (6-MP) and 5-fluorouracil (5-FU). Mediates the transport of PAH, PCG, and the statins pravastatin and pitavastatin, from the cerebrum into the blood circulation across the blood-brain barrier (BBB). In summary, plays a role in the efflux of drugs and xenobiotics, helping reduce their undesired toxicological effects on the body. The sequence is that of Organic anion transporter 3 from Homo sapiens (Human).